Reading from the N-terminus, the 296-residue chain is Transcription factor Pur-alpha 1 (296 aa).

Met-1 carries the N-acetylmethionine modification. Disordered regions lie at residues 1–25 and 186–214; these read MEAN…GGGG and IPGH…EETG. Phosphoserine is present on Ser-207.

It belongs to the PUR DNA-binding protein family. Homodimer. Interacts with TCP20.

The protein localises to the nucleus. Its function is as follows. Transcription factor that specifically binds the purine-rich double-stranded telomeric repeated sequence 5'-AAACCCTAA-3' found in promoter telo boxes. The chain is Transcription factor Pur-alpha 1 (PURA1) from Arabidopsis thaliana (Mouse-ear cress).